The sequence spans 1369 residues: Mediator of RNA polymerase II transcription subunit 23 (1369 aa).

The interval 1337–1369 is disordered; sequence TESAAPPPPPMNSGSPAPQPNQVPVSVPLTVTQ. A compositionally biased stretch (pro residues) spans 1341–1357; the sequence is APPPPPMNSGSPAPQPN.

It belongs to the Mediator complex subunit 23 family. In terms of assembly, component of the Mediator complex.

It localises to the nucleus. In terms of biological role, component of the Mediator complex, a coactivator involved in the regulated transcription of nearly all RNA polymerase II-dependent genes. Mediator functions as a bridge to convey information from gene-specific regulatory proteins to the basal RNA polymerase II transcription machinery. Mediator is recruited to promoters by direct interactions with regulatory proteins and serves as a scaffold for the assembly of a functional preinitiation complex with RNA polymerase II and the general transcription factors. The polypeptide is Mediator of RNA polymerase II transcription subunit 23 (med23) (Xenopus laevis (African clawed frog)).